Here is a 110-residue protein sequence, read N- to C-terminus: MAKHHPDLIMCRKQPGIAIGRLCEKCDGKCVICDSYVRPCTLVRICDECNYGSFQGRCVICGGVGISDAYYCKECTQQEKDRDGCPKIVNLGSAKTDLFYERKKYGFKKR.

The protein belongs to the PHF5 family.

This Arabidopsis thaliana (Mouse-ear cress) protein is PHD finger-like domain-containing protein 5B.